The following is a 230-amino-acid chain: Uracil-DNA glycosylase (230 aa).

The active-site Proton acceptor is Asp-71.

This sequence belongs to the uracil-DNA glycosylase (UDG) superfamily. UNG family.

It localises to the cytoplasm. It catalyses the reaction Hydrolyzes single-stranded DNA or mismatched double-stranded DNA and polynucleotides, releasing free uracil.. Functionally, excises uracil residues from the DNA which can arise as a result of misincorporation of dUMP residues by DNA polymerase or due to deamination of cytosine. The chain is Uracil-DNA glycosylase from Tropheryma whipplei (strain TW08/27) (Whipple's bacillus).